The following is a 165-amino-acid chain: Cell division protein SepF (165 aa).

Positions 23-75 (DEYGDYAGDYETQETAPVATRSSKRESRPAPVSDLSERRRPASGPTGVVAELS) are disordered.

The protein belongs to the SepF family. In terms of assembly, homodimer. Interacts with FtsZ.

It localises to the cytoplasm. Its function is as follows. Cell division protein that is part of the divisome complex and is recruited early to the Z-ring. Probably stimulates Z-ring formation, perhaps through the cross-linking of FtsZ protofilaments. Its function overlaps with FtsA. This is Cell division protein SepF from Nocardioides sp. (strain ATCC BAA-499 / JS614).